Consider the following 278-residue polypeptide: Embryonic polyadenylate-binding protein 2 (278 aa).

Disordered regions lie at residues 21–66 and 101–128; these read VSSD…GDAG and EGTPRPPGVQQQAEEEEGTAAGQLLSPE. Basic and acidic residues predominate over residues 35–50; it reads ETKEILGPEGGEGKEE. Acidic residues predominate over residues 51 to 63; the sequence is KEEEEDAEEDQDG. Residues 147 to 224 form the RRM domain; that stretch reads RSVYVGNVDY…RVIKVLPKRT (78 aa). A disordered region spans residues 227-278; the sequence is PGISSTDRGGLRGHPGSRGAPFPHSGLQGRPRLRPQGQNRARGKFSPWFSPY.

Expressed in various adult tissues.

The protein resides in the cytoplasm. Functionally, binds the poly(A) tail of mRNA. In Homo sapiens (Human), this protein is Embryonic polyadenylate-binding protein 2 (PABPN1L).